The following is a 448-amino-acid chain: tRNA modification GTPase MnmE (448 aa).

(6S)-5-formyl-5,6,7,8-tetrahydrofolate is bound by residues R22, E79, and K118. The TrmE-type G domain maps to 214-371 (GLHVVLAGQP…LRQELLRIAG (158 aa)). N224 lines the K(+) pocket. GTP contacts are provided by residues 224–229 (NVGKSS), 243–249 (TPIAGTT), and 268–271 (DTAG). Residue S228 participates in Mg(2+) binding. T243, I245, and T248 together coordinate K(+). T249 contacts Mg(2+). K448 provides a ligand contact to (6S)-5-formyl-5,6,7,8-tetrahydrofolate.

It belongs to the TRAFAC class TrmE-Era-EngA-EngB-Septin-like GTPase superfamily. TrmE GTPase family. Homodimer. Heterotetramer of two MnmE and two MnmG subunits. It depends on K(+) as a cofactor.

The protein localises to the cytoplasm. In terms of biological role, exhibits a very high intrinsic GTPase hydrolysis rate. Involved in the addition of a carboxymethylaminomethyl (cmnm) group at the wobble position (U34) of certain tRNAs, forming tRNA-cmnm(5)s(2)U34. The protein is tRNA modification GTPase MnmE of Dechloromonas aromatica (strain RCB).